Here is a 171-residue protein sequence, read N- to C-terminus: MDYFTLFGLPASYHIDTQALSLRFQDLQRQYHPDKFANGTQAQHLAAVQQSATINQAWQTLRHPLTRAEYLLSLHGFDLASEQHTVRDTAFLMEQLTLREELDDIEQTKDDARLESFIKRVQKMFDTRLQQMVTQLDNAAWGEAADTVRKLRFLDKLRSSADQLEEKLLDF.

One can recognise a J domain in the interval 2 to 74 (DYFTLFGLPA…LTRAEYLLSL (73 aa)).

It belongs to the HscB family. Interacts with HscA and stimulates its ATPase activity. Interacts with IscU.

Co-chaperone involved in the maturation of iron-sulfur cluster-containing proteins. Seems to help targeting proteins to be folded toward HscA. The chain is Co-chaperone protein HscB from Salmonella arizonae (strain ATCC BAA-731 / CDC346-86 / RSK2980).